The chain runs to 341 residues: AB hydrolase superfamily protein C1039.03 (341 aa).

It belongs to the AB hydrolase superfamily.

The protein resides in the cytoplasm. It localises to the nucleus. The protein is AB hydrolase superfamily protein C1039.03 of Schizosaccharomyces pombe (strain 972 / ATCC 24843) (Fission yeast).